We begin with the raw amino-acid sequence, 208 residues long: Putative dioxygenase RC0543 (208 aa).

This sequence belongs to the intradiol ring-cleavage dioxygenase family.

In Rickettsia conorii (strain ATCC VR-613 / Malish 7), this protein is Putative dioxygenase RC0543.